We begin with the raw amino-acid sequence, 551 residues long: E-selectin (551 aa).

The N-terminal stretch at 1-23 is a signal peptide; that stretch reads MVASWLLSTLTFALVLLIKETST. Residues 24–141 enclose the C-type lectin domain; sequence WTYHFSAENM…CSKKKLALCY (118 aa). Residues 24–495 lie on the Extracellular side of the membrane; sequence WTYHFSAENM…CEEPIASNVP (472 aa). Residues Asn32 and Asn45 are each glycosylated (N-linked (GlcNAc...) asparagine). 17 cysteine pairs are disulfide-bonded: Cys42–Cys140, Cys113–Cys132, Cys145–Cys156, Cys150–Cys165, Cys167–Cys176, Cys182–Cys226, Cys195–Cys208, Cys212–Cys239, Cys244–Cys288, Cys257–Cys270, Cys274–Cys301, Cys306–Cys351, Cys337–Cys364, Cys369–Cys414, Cys400–Cys427, Cys432–Cys473, and Cys459–Cys486. 3 residues coordinate Ca(2+): Glu103, Asn105, and Glu111. A carbohydrate is bound by residues 103-111, 115-120, and 128-130; these read EPNNKQNNE, EIYIKR, and NDE. Ca(2+) contacts are provided by Asn128 and Asp129. The EGF-like domain occupies 142 to 177; sequence TAACTEASCSGHGECIETINNYSCKCYPGFSGLKCE. Asn162 carries an N-linked (GlcNAc...) asparagine glycan. Sushi domains are found at residues 180–241, 242–303, 305–366, 368–429, and 430–488; these read VTCE…TCKV, VECD…TCKA, SCDT…VCEA, KCDP…SCQV, and VQCP…TCEE. 3 N-linked (GlcNAc...) asparagine glycosylation sites follow: Asn194, Asn201, and Asn205. An N-linked (GlcNAc...) asparagine glycan is attached at Asn267. Residues Asn314, Asn321, and Asn334 are each glycosylated (N-linked (GlcNAc...) asparagine). N-linked (GlcNAc...) asparagine glycans are attached at residues Asn442 and Asn466. A helical membrane pass occupies residues 496–517; sequence LAVGLSVSGTSFLTLTSFLLWF. At 518–551 the chain is on the cytoplasmic side; it reads LKYFRKKAKKFVPASSRYVGLEAHGNCQVPSHLI.

It belongs to the selectin/LECAM family. Interacts with SELPLG/PSGL1 and PODXL2 through the sialyl Lewis X epitope. SELPLG sulfation appears not to be required for this interaction.

Its subcellular location is the cell membrane. In terms of biological role, cell-surface glycoprotein having a role in immunoadhesion. Mediates in the adhesion of blood neutrophils in cytokine-activated endothelium through interaction with SELPLG/PSGL1. May have a role in capillary morphogenesis. The protein is E-selectin (SELE) of Oryctolagus cuniculus (Rabbit).